Here is a 228-residue protein sequence, read N- to C-terminus: Max-interacting protein 1 (228 aa).

Disordered stretches follow at residues 29–76 (GYAS…NELE) and 161–228 (IGST…SFTS). Over residues 43–56 (QHSKPPRRLSRAQK) the composition is skewed to basic residues. Polar residues predominate over residues 57 to 70 (HSSGSSNTSTANRS). Positions 67 to 119 (ANRSTHNELEKNRRAHLRLCLERLKVLIPLGPDCTRHTTLGLLNKAKAHIKKL) constitute a bHLH domain. The segment covering 173–183 (EREEIEVDVES) has biased composition (acidic residues). Over residues 216–228 (GYSSASVKLSFTS) the composition is skewed to polar residues.

As to quaternary structure, interacts with SMC3. Efficient DNA binding requires dimerization with another bHLH protein. Binds DNA as a heterodimer with MAX. Interacts with RNF17. In terms of tissue distribution, high levels found in the brain, heart and lung while lower levels are seen in the liver, kidney and skeletal muscle.

It is found in the nucleus. Transcriptional repressor. MXI1 binds with MAX to form a sequence-specific DNA-binding protein complex which recognizes the core sequence 5'-CAC[GA]TG-3'. MXI1 thus antagonizes MYC transcriptional activity by competing for MAX. This is Max-interacting protein 1 (MXI1) from Homo sapiens (Human).